The primary structure comprises 224 residues: Adenylate kinase (224 aa).

Residue 10–15 (GSGKGT) coordinates ATP. The interval 30–59 (ESGAIFRENISKGTELGAKAKEYIDRGDLV) is NMP. Residues Ser31, Arg36, 57-59 (DLV), 85-88 (GFPR), and Gln92 each bind AMP. Residues 126–165 (GRRLCVNDNNHPNNIFIDAIKPDGDKCRVCGGELKTRSDD) form an LID region. Arg127 provides a ligand contact to ATP. AMP contacts are provided by Arg162 and Arg174. Residue Pro211 participates in ATP binding.

Belongs to the adenylate kinase family. Monomer.

It is found in the cytoplasm. It catalyses the reaction AMP + ATP = 2 ADP. It functions in the pathway purine metabolism; AMP biosynthesis via salvage pathway; AMP from ADP: step 1/1. In terms of biological role, catalyzes the reversible transfer of the terminal phosphate group between ATP and AMP. Plays an important role in cellular energy homeostasis and in adenine nucleotide metabolism. This is Adenylate kinase from Desulfosudis oleivorans (strain DSM 6200 / JCM 39069 / Hxd3) (Desulfococcus oleovorans).